We begin with the raw amino-acid sequence, 120 residues long: uncharacterized protein (120 aa).

The N-acetyltransferase domain occupies 3–120 (IRYKKAFEKI…EKCEICHGSE (118 aa)).

This is an uncharacterized protein from Bacillus methanolicus.